The following is a 192-amino-acid chain: UPF0312 protein PputW619_0484 (192 aa).

A signal peptide spans methionine 1–alanine 23.

It belongs to the UPF0312 family. Type 1 subfamily.

The protein localises to the periplasm. The sequence is that of UPF0312 protein PputW619_0484 from Pseudomonas putida (strain W619).